A 643-amino-acid polypeptide reads, in one-letter code: MRPRKAWMLVLLLALVQLLAVASAGAPDEDSTDKEDAIEEDEEEDEDDDDDDDDLEVKEENGVLILNDANFDNFVADKDTVLLEFYAPWCGHCKQFAPEYEKIAATLKENDPPIPVAKIDATSESALASRFDVSGYPTIKILKKGQEVDYEGSRTQEEIVAKVKEVSQPNWTPPPEVTLVLTKDNFDEVVNDADIILVEFYAPWCGHCKKLAPEYEKAAKELSKSSPPIPLAKVDAIAETDLAKRFDVSSYPTLKIFRKGKAFSYNGPREKYGIVDYMMEQSGPPSKQILALKQVQEFLKDGDDVIIIGVFKSESDPAYQLYQDAANSLREDYKFHHTFSTEIAKFLKVSLGKLVVMQPEKFQSKYEPKSYVMDIKDSTEAAAITEHVVKHTLPLVGHRKAADAKRYTRRPLVVVYYSVDFSFDYRAATQFWRNKVLEVAKDFPEYTFAVADEEDFATELKDLGLSESGEEVNAAILDEGGRRFAMEPDDFDADALRDFVTAFKKGKLKPVIKSQPVPKNNKGPVKVVVGKTFDSIVMDPKKDVLIEFYAPWCGHCKQLEPVYTSLGKKYKGHKNLVIAKMDATANDVTSDRYKVEGFPTIYFAPSGDKKKPIKFEDGNRDLEHLSKFIEEHATKLSRTKEEL.

An N-terminal signal peptide occupies residues 1–20 (MRPRKAWMLVLLLALVQLLA). Thioredoxin domains lie at 21-168 (VASA…EVSQ) and 170-300 (NWTP…EFLK). Positions 24 to 54 (AGAPDEDSTDKEDAIEEDEEEDEDDDDDDDD) are disordered. Residues 27-54 (PDEDSTDKEDAIEEDEEEDEDDDDDDDD) show a composition bias toward acidic residues. The short motif at 90-93 (CGHC) is the CXXC element. Intrachain disulfides connect C90–C93 and C205–C208. K365 is modified (N6-acetyllysine). The Thioredoxin 3 domain occupies 503–634 (FKKGKLKPVI…LSKFIEEHAT (132 aa)). Positions 553–556 (CGHC) match the CXXC motif. C553 and C556 are disulfide-bonded. The short motif at 640–643 (KEEL) is the Prevents secretion from ER element.

Belongs to the protein disulfide isomerase family. As to quaternary structure, part of a large chaperone multiprotein complex comprising DNAJB11, HSP90B1, HSPA5, HYOU, PDIA2, PDIA4, PDIA6, PPIB, SDF2L1, UGGT1 and very small amounts of ERP29, but not, or at very low levels, CALR nor CANX. Component of a complex containing at least CRELD2, MANF, MATN3 and PDIA4.

The protein localises to the endoplasmic reticulum lumen. The protein resides in the melanosome. It carries out the reaction Catalyzes the rearrangement of -S-S- bonds in proteins.. The protein is Protein disulfide-isomerase A4 (PDIA4) of Bos taurus (Bovine).